The chain runs to 81 residues: Photosystem I iron-sulfur center (81 aa).

2 4Fe-4S ferredoxin-type domains span residues 2–31 and 39–68; these read SHSV…MIPW and IASA…VRVY. [4Fe-4S] cluster contacts are provided by Cys-11, Cys-14, Cys-17, Cys-21, Cys-48, Cys-51, Cys-54, and Cys-58.

In terms of assembly, the eukaryotic PSI reaction center is composed of at least 11 subunits. Requires [4Fe-4S] cluster as cofactor.

It is found in the plastid thylakoid membrane. It catalyses the reaction reduced [plastocyanin] + hnu + oxidized [2Fe-2S]-[ferredoxin] = oxidized [plastocyanin] + reduced [2Fe-2S]-[ferredoxin]. Functionally, apoprotein for the two 4Fe-4S centers FA and FB of photosystem I (PSI); essential for photochemical activity. FB is the terminal electron acceptor of PSI, donating electrons to ferredoxin. The C-terminus interacts with PsaA/B/D and helps assemble the protein into the PSI complex. Required for binding of PsaD and PsaE to PSI. PSI is a plastocyanin-ferredoxin oxidoreductase, converting photonic excitation into a charge separation, which transfers an electron from the donor P700 chlorophyll pair to the spectroscopically characterized acceptors A0, A1, FX, FA and FB in turn. The polypeptide is Photosystem I iron-sulfur center (Cuscuta obtusiflora (Peruvian dodder)).